Consider the following 1249-residue polypeptide: Voltage-dependent calcium channel unc-36 (1249 aa).

A signal peptide spans 1 to 19 (MRVVHLLVVLATYVSTTSS). Over 20–1228 (FNKESIKECA…SENERRPCST (1209 aa)) the chain is Extracellular. 11 N-linked (GlcNAc...) asparagine glycosylation sites follow: Asn-100, Asn-140, Asn-146, Asn-302, Asn-520, Asn-558, Asn-757, Asn-838, Asn-903, Asn-923, and Asn-1130. The VWFA domain maps to 250-479 (NVLIMLDMSG…EKIHHYIRRM (230 aa)). Residues 1229 to 1248 (SPTIVSIFQILFGVFLHFCI) traverse the membrane as a helical segment. Phe-1249 is a topological domain (cytoplasmic).

As to expression, decendants of the cells AB and AB.p (that give rise to nearly all non-pharyngeal neurons), decendants of P1 (that give rise to body muscle) and cell lineages that give rise to the adult and juvenile motor neurons. Expressed in body wall, vulval muscle and pharyngeal muscle.

The protein resides in the membrane. Functionally, may act as an auxiliary subunit of the unc-2 voltage-gated calcium channel which appears to trigger calcium-activated signaling pathways that control the serotonin response. Inhibiting serotonin sensitivity of the vulval muscles results in egg laying defects. May act in both neurons and muscle cells to enhance motor activity as it is required for coordinated movement. Has a role in neural depolarization-induced calcium influx and pharyngeal pumping. Involved in restricting the expression of the putative olfactory receptor str-2 to only one of the two AWC neurons. The polypeptide is Voltage-dependent calcium channel unc-36 (unc-36) (Caenorhabditis elegans).